We begin with the raw amino-acid sequence, 403 residues long: Protein STRICTOSIDINE SYNTHASE-LIKE 13 (403 aa).

The N-terminal stretch at 1–42 is a signal peptide; it reads MEKKGQHGTYESMMTHHPILCIIALSVLFIAIDPFHMSPIGG. Residues N66 and N206 are each glycosylated (N-linked (GlcNAc...) asparagine).

The protein belongs to the strictosidine synthase family.

It is found in the vacuole. Its function is as follows. Required for the exine formation during pollen development. In Arabidopsis thaliana (Mouse-ear cress), this protein is Protein STRICTOSIDINE SYNTHASE-LIKE 13.